The primary structure comprises 207 residues: NADH-quinone oxidoreductase chain 5 (207 aa).

This sequence belongs to the complex I 30 kDa subunit family. NDH-1 is composed of at least 14 different subunits, Nqo1 to Nqo14. The complex has a L-shaped structure, with the hydrophobic arm (subunits Nqo7, Nqo8, Nqo10 to Nqo14) embedded in the inner membrane and the hydrophilic peripheral arm (subunits Nqo1 to Nqo6, Nqo9) protruding into the bacterial cytoplasm. The hydrophilic domain contains all the redox centers.

It is found in the cell inner membrane. The enzyme catalyses a quinone + NADH + 5 H(+)(in) = a quinol + NAD(+) + 4 H(+)(out). In terms of biological role, NDH-1 shuttles electrons from NADH, via FMN and iron-sulfur (Fe-S) centers, to quinones in the respiratory chain. The immediate electron acceptor for the enzyme in this species is believed to be ubiquinone. Couples the redox reaction to proton translocation (for every two electrons transferred, four hydrogen ions are translocated across the cytoplasmic membrane), and thus conserves the redox energy in a proton gradient. The sequence is that of NADH-quinone oxidoreductase chain 5 (nqo5) from Paracoccus denitrificans.